Reading from the N-terminus, the 305-residue chain is Ribosomal protein L11 methyltransferase (305 aa).

The S-adenosyl-L-methionine site is built by Thr-152, Gly-173, Asp-195, and Asn-237.

Belongs to the methyltransferase superfamily. PrmA family.

It is found in the cytoplasm. It carries out the reaction L-lysyl-[protein] + 3 S-adenosyl-L-methionine = N(6),N(6),N(6)-trimethyl-L-lysyl-[protein] + 3 S-adenosyl-L-homocysteine + 3 H(+). Functionally, methylates ribosomal protein L11. This is Ribosomal protein L11 methyltransferase from Hamiltonella defensa subsp. Acyrthosiphon pisum (strain 5AT).